The chain runs to 436 residues: F-box protein SKIP16 (436 aa).

An F-box; degenerate domain is found at 75 to 111 (RESFRMYPWNLVKRVRLCWDNLKQWLTLNFPEAKATL). Residues 295 to 436 (VSVTNGVQVR…FPLELPDYIF (142 aa)) form the ApaG domain.

As to quaternary structure, part of a SCF (ASK-cullin-F-box) protein ligase complex. Interacts with SKP1A/ASK1, SKP1B/ASK2, ASK4, ASK11 and ASK13.

It participates in protein modification; protein ubiquitination. Component of SCF(ASK-cullin-F-box) E3 ubiquitin ligase complexes, which may mediate the ubiquitination and subsequent proteasomal degradation of target proteins. The sequence is that of F-box protein SKIP16 (SKIP16) from Arabidopsis thaliana (Mouse-ear cress).